Consider the following 184-residue polypeptide: Putative manganese efflux pump MntP (184 aa).

6 helical membrane passes run 5 to 25, 38 to 58, 67 to 87, 107 to 127, 133 to 153, and 164 to 184; these read LISIIIIAIALAMDAFSVSLT, ILYYGLFFGFFQFIMPVIGYI, VSTVAPWIAFFLLLAIGLNMI, LTLLAVATSIDAFAVGITFAL, LLPCTIIGIVAFIFSISGIFI, and KFEILGGAVLILIGIKILLGY.

It belongs to the MntP (TC 9.B.29) family.

The protein localises to the cell membrane. Its function is as follows. Probably functions as a manganese efflux pump. This is Putative manganese efflux pump MntP from Methanobrevibacter smithii (strain ATCC 35061 / DSM 861 / OCM 144 / PS).